Reading from the N-terminus, the 58-residue chain is UPF0391 membrane protein Plav_0056 (58 aa).

Helical transmembrane passes span 4–24 (WAAV…GGLV) and 30–50 (IAQI…IFGV).

This sequence belongs to the UPF0391 family.

Its subcellular location is the cell membrane. The polypeptide is UPF0391 membrane protein Plav_0056 (Parvibaculum lavamentivorans (strain DS-1 / DSM 13023 / NCIMB 13966)).